A 418-amino-acid chain; its full sequence is Chromo domain-containing protein rhino (418 aa).

In terms of domain architecture, Chromo spans 24–74; that stretch reads YVVEKILGKRFVNGRPQVLVKWSGFPNENNTWEPLENVGNCMKLVSDFESE. Composition is skewed to low complexity over residues 84 to 99 and 107 to 120; these read AKSV…SSGP and SSSK…KSVQ. Disordered regions lie at residues 84–167 and 199–337; these read AKSV…TDST and PTKD…RCPR. The span at 131 to 143 shows a compositional bias: basic residues; that stretch reads NQKKGKNIKKTAG. Over residues 152-167 the composition is skewed to polar residues; the sequence is PKTQMPSTSQVSTDST. The segment covering 218 to 228 has biased composition (basic and acidic residues); the sequence is RLIEFPQREDA. A compositionally biased stretch (low complexity) spans 258 to 275; sequence GESSSSMSLPTVSSTSSE. Positions 276–285 are enriched in basic and acidic residues; that stretch reads KSIKVTKSEP. The required for interaction with del/deadlock stretch occupies residues 353 to 418; it reads TKPFGVNRGL…FESLRIIVPK (66 aa).

In terms of assembly, homodimer in solution. Dimerization is essential for chromatin binding. Component of the Rhino-Deadlock-Cutoff (RDC) complex, composed of rhi/rhino, del/deadlock and cuff/cutoff. Interacts (via C-terminus) with del/deadlock (via N-terminus); this interaction is direct. Two copies of del/deadlock associate with each rhi/rhino dimer. Interacts with cuff/cutoff; this interaction is indirect and is mediated by del/deadlock. Interacts (via Chromo domain) with kipf/kipferl (via C2H2 type zinc finger 4). Interacts (via Chromo domain) with His3/histone H3 (via N-terminus di- or tri-methylated on 'Lys-10' (H3K9me2/3)); this interaction is direct. Two His3 N-terminal tails oriented anti-parallel to each other are required for dimer binding to His3. Female specific, expressed in both somatic and germline cells but highly enriched in ovaries. In the germarium of the developing oocyte expressed in germline stem cells, cystoblasts and developing germline cysts. Expressed in nurse cells in the germarium and egg chamber.

The protein resides in the nucleus. The protein localises to the chromosome. Its function is as follows. Involved in piRNA (piwi-interacting RNA)-mediated transposon repression. May be involved in formation of the perinuclear nuage, a subcellular structure implicated in RNA processing that may be involved in transposon RNA surveillance and silencing. Required for ping-pong amplification during piRNA biogenesis, probably by promoting transcription of piRNA precursors. As part of the Rhino-Deadlock-Cutoff (RDC) Complex associates with, and drives non-canonical transcription of germline specific dual-strand piRNA clusters 80F, 38C and 42AB, but not single-stranded piRNA cluster 20A. Induction of piRNA expression is potentially achieved through a mechanism that prevents transcriptional termination and leads to readthrough from flanking transcription units. Recruited to specific chromatin regions by a combination of H3K9me2/3 histone methylation and differentially expressed sequence-specific recruitment factors. This association may involve direct interaction with DNA. Associates with chromatin upon exposure to homologous piRNA and facilitates transcriptional read-through. As part of the RDC complex, involved in suppression of splicing. In ovaries, recruitment to specific heterochromatin clusters is nucleated and stabilized by kipf/kipferl. During oogenesis, involved in axis specification and may regulate chromosome condensation at the onset of a mitotic-like phase that occurs during nurse cell chromosome duplication. Involved in the distribution of mRNAs for proteins that play a role in anterior-posterior and dorsal-ventral axes specification during development of the oocyte, including grk/gurken, osk/oskar and vas/vasa. Mitigates meiotic double strand breaks and interacts with DNA damage signaling to mediate axis specification. This chain is Chromo domain-containing protein rhino, found in Drosophila melanogaster (Fruit fly).